A 127-amino-acid polypeptide reads, in one-letter code: Small ribosomal subunit protein uS13 (127 aa).

Residues 97-127 are disordered; the sequence is PVRGQRTKTNARTRKGPRKTVAGKKGVKDLR. Over residues 101-118 the composition is skewed to basic residues; it reads QRTKTNARTRKGPRKTVA.

Belongs to the universal ribosomal protein uS13 family. In terms of assembly, part of the 30S ribosomal subunit. Forms a loose heterodimer with protein S19. Forms two bridges to the 50S subunit in the 70S ribosome.

Functionally, located at the top of the head of the 30S subunit, it contacts several helices of the 16S rRNA. In the 70S ribosome it contacts the 23S rRNA (bridge B1a) and protein L5 of the 50S subunit (bridge B1b), connecting the 2 subunits; these bridges are implicated in subunit movement. Contacts the tRNAs in the A and P-sites. This is Small ribosomal subunit protein uS13 from Rhodopirellula baltica (strain DSM 10527 / NCIMB 13988 / SH1).